A 407-amino-acid polypeptide reads, in one-letter code: Peptidase T (407 aa).

Residue histidine 82 coordinates Zn(2+). Residue aspartate 84 is part of the active site. Aspartate 143 serves as a coordination point for Zn(2+). Glutamate 177 serves as the catalytic Proton acceptor. Zn(2+)-binding residues include glutamate 178, aspartate 200, and histidine 382.

This sequence belongs to the peptidase M20B family. Zn(2+) is required as a cofactor.

The protein localises to the cytoplasm. The enzyme catalyses Release of the N-terminal residue from a tripeptide.. Its function is as follows. Cleaves the N-terminal amino acid of tripeptides. This Streptococcus pyogenes serotype M49 (strain NZ131) protein is Peptidase T.